Here is a 149-residue protein sequence, read N- to C-terminus: Large-conductance mechanosensitive channel (149 aa).

3 helical membrane-spanning segments follow: residues 10 to 30 (FALK…GAFA), 41 to 61 (IMPI…MFLI), and 87 to 107 (GSFI…FMMV).

It belongs to the MscL family. In terms of assembly, homopentamer.

It is found in the cell inner membrane. Functionally, channel that opens in response to stretch forces in the membrane lipid bilayer. May participate in the regulation of osmotic pressure changes within the cell. In Psychrobacter cryohalolentis (strain ATCC BAA-1226 / DSM 17306 / VKM B-2378 / K5), this protein is Large-conductance mechanosensitive channel.